A 304-amino-acid polypeptide reads, in one-letter code: Killer cell immunoglobulin-like receptor 2DS1 (304 aa).

Positions 1-21 are cleaved as a signal peptide; that stretch reads MSLTVVSMACVGFFLLQGAWP. Topologically, residues 22 to 245 are extracellular; sequence HEGVHRKPSL…SETGNPRHLH (224 aa). Ig-like C2-type domains follow at residues 42-107 and 142-205; these read EETV…VTHS and GENV…FRDS. Cys-49 and Cys-100 are oxidised to a cystine. N-linked (GlcNAc...) asparagine glycosylation is found at Asn-67, Asn-84, Asn-144, and Asn-178. Cys-149 and Cys-198 are disulfide-bonded. The tract at residues 220–239 is disordered; it reads VTGNPSNSWPSPTEPSSETG. A compositionally biased stretch (low complexity) spans 223-239; sequence NPSNSWPSPTEPSSETG. The chain crosses the membrane as a helical span at residues 246 to 264; that stretch reads VLIGTSVVKIPFTILLFFL. At 265-304 the chain is on the cytoplasmic side; it reads LHRWCSDKKNAAVMDQEPAGNRTVNSEDSDEQDHQEVSYA. The disordered stretch occupies residues 280–304; the sequence is QEPAGNRTVNSEDSDEQDHQEVSYA.

It belongs to the immunoglobulin superfamily. Interacts with the adapter protein TYROBP/DAP12; the interaction enhances KIR2DS1 stability at the cell surface. Expressed by NK cells.

It is found in the cell membrane. Functionally, receptor on natural killer (NK) cells for some HLA-C alleles such as w6. Does not inhibit the activity of NK cells. The polypeptide is Killer cell immunoglobulin-like receptor 2DS1 (Homo sapiens (Human)).